Consider the following 160-residue polypeptide: Transcriptional repressor NrdR (160 aa).

The segment at 3-34 (CPRCHHNNSRVIDSRQADDGRAIRRRRECENC) is a zinc-finger region. One can recognise an ATP-cone domain in the interval 49-139 (LLVIKKNGDR…VYRQFKDMSV (91 aa)).

It belongs to the NrdR family. Zn(2+) is required as a cofactor.

Functionally, negatively regulates transcription of bacterial ribonucleotide reductase nrd genes and operons by binding to NrdR-boxes. The sequence is that of Transcriptional repressor NrdR from Enterococcus faecalis (strain ATCC 700802 / V583).